A 426-amino-acid polypeptide reads, in one-letter code: Anaerobic glycerol-3-phosphate dehydrogenase subunit B (426 aa).

It belongs to the anaerobic G-3-P dehydrogenase subunit B family. In terms of assembly, composed of a catalytic GlpA/B dimer and of membrane bound GlpC. It depends on FMN as a cofactor.

The enzyme catalyses a quinone + sn-glycerol 3-phosphate = dihydroxyacetone phosphate + a quinol. Its pathway is polyol metabolism; glycerol degradation via glycerol kinase pathway; glycerone phosphate from sn-glycerol 3-phosphate (anaerobic route): step 1/1. In terms of biological role, conversion of glycerol 3-phosphate to dihydroxyacetone. Uses fumarate or nitrate as electron acceptor. The protein is Anaerobic glycerol-3-phosphate dehydrogenase subunit B of Haemophilus ducreyi (strain 35000HP / ATCC 700724).